Here is a 662-residue protein sequence, read N- to C-terminus: DNA ligase (662 aa).

Residues 31 to 35, 79 to 80, and glutamate 119 contribute to the NAD(+) site; these read DSEYD and SL. Lysine 121 acts as the N6-AMP-lysine intermediate in catalysis. NAD(+) is bound by residues arginine 142, glutamate 176, lysine 288, and lysine 312. 4 residues coordinate Zn(2+): cysteine 405, cysteine 408, cysteine 421, and cysteine 427. Residues 583–662 form the BRCT domain; the sequence is NIEKKLDNLT…DELNSFLDNL (80 aa).

The protein belongs to the NAD-dependent DNA ligase family. LigA subfamily. The cofactor is Mg(2+). Requires Mn(2+) as cofactor.

The enzyme catalyses NAD(+) + (deoxyribonucleotide)n-3'-hydroxyl + 5'-phospho-(deoxyribonucleotide)m = (deoxyribonucleotide)n+m + AMP + beta-nicotinamide D-nucleotide.. Its function is as follows. DNA ligase that catalyzes the formation of phosphodiester linkages between 5'-phosphoryl and 3'-hydroxyl groups in double-stranded DNA using NAD as a coenzyme and as the energy source for the reaction. It is essential for DNA replication and repair of damaged DNA. This is DNA ligase from Finegoldia magna (strain ATCC 29328 / DSM 20472 / WAL 2508) (Peptostreptococcus magnus).